A 216-amino-acid chain; its full sequence is Octanoyltransferase (216 aa).

Residues 35–213 (NSNPDFIWIG…TIEEEFNFDF (179 aa)) enclose the BPL/LPL catalytic domain. Substrate-binding positions include 77–84 (RGGEVTCH), 144–146 (SIG), and 157–159 (GFS). Cys175 (acyl-thioester intermediate) is an active-site residue.

Belongs to the LipB family.

It is found in the cytoplasm. It catalyses the reaction octanoyl-[ACP] + L-lysyl-[protein] = N(6)-octanoyl-L-lysyl-[protein] + holo-[ACP] + H(+). It functions in the pathway protein modification; protein lipoylation via endogenous pathway; protein N(6)-(lipoyl)lysine from octanoyl-[acyl-carrier-protein]: step 1/2. Catalyzes the transfer of endogenously produced octanoic acid from octanoyl-acyl-carrier-protein onto the lipoyl domains of lipoate-dependent enzymes. Lipoyl-ACP can also act as a substrate although octanoyl-ACP is likely to be the physiological substrate. The protein is Octanoyltransferase of Prochlorococcus marinus (strain MIT 9301).